Reading from the N-terminus, the 346-residue chain is Cytosolic sulfotransferase 17 (346 aa).

3'-phosphoadenylyl sulfate is bound at residue 89–94 (KTGTTW). Catalysis depends on His151, which acts as the Proton acceptor. Residues Arg173, Ser181, Tyr239, and 309–311 (RKG) contribute to the 3'-phosphoadenylyl sulfate site.

It belongs to the sulfotransferase 1 family. Highly expressed in roots, stems and mature leaves. Low expression in young leaves and flowers. Barely detected in siliques.

The protein localises to the cytoplasm. The enzyme catalyses an aliphatic (Z)-desulfo-glucosinolate + 3'-phosphoadenylyl sulfate = a (Z)-omega-(methylsulfanyl)-N-sulfo-alkylhydroximate S-glucoside + adenosine 3',5'-bisphosphate + H(+). Its activity is regulated as follows. Inhibited by phosphoadenosine 5'-phosphate (PAP). Functionally, sulfotransferase that utilizes 3'-phospho-5'-adenylyl sulfate (PAPS) as sulfonate donor to catalyze the sulfate conjugation of desulfo-glucosinolates (dsGSs), the final step in the biosynthesis of the glucosinolate core structure. Substrate preference is desulfo-benzyl glucosinolate &gt; desulfo-6-methylthiohexyl glucosinolate. Increased specific activity with increasing chain length of desulfo-glucosinolate derived from methionine. Preferred substrate is desulfo-8-methylthiooctyl glucosinolate. The sequence is that of Cytosolic sulfotransferase 17 (SOT17) from Arabidopsis thaliana (Mouse-ear cress).